Reading from the N-terminus, the 382-residue chain is MISCHSFTMTPSAPNSTVLPSATPVCPQSSACRWRGLIETYRPYLPVSDQTPVVTLLEGNTPLIPAPAIAKRIGKDVRVFVKYDGLNPTGSFKDRGMTMAISKAKEAGAKAVICASTGNTSAAAAAYARRAGLRAFVIIPDGYVALGKLGQALIYGAEVIAIDGNFDDALTTVRQLSEHYPVTLVNSVNPYRLEGQKTAAFEIVDVLGQAPDWLCIPVGNAGNITAYWMGFCQYKELGKGDRLPRMMGFQAAGSAPFIQGQPISHPETLATAIRIGNPANWDKAWAASRESNGEFHPVTDAEILEAYRILAAEEGVFCEPASAASVAGLLKQKDQVPAGATVVCVLTGNGLKDPDCAVQNSGNQVKAGLKPDLEIVAKAMGF.

At Lys93 the chain carries N6-(pyridoxal phosphate)lysine. Pyridoxal 5'-phosphate is bound by residues Asn119, 219 to 223 (GNAGN), and Thr347.

It belongs to the threonine synthase family. Requires pyridoxal 5'-phosphate as cofactor.

The enzyme catalyses O-phospho-L-homoserine + H2O = L-threonine + phosphate. Its pathway is amino-acid biosynthesis; L-threonine biosynthesis; L-threonine from L-aspartate: step 5/5. In terms of biological role, catalyzes the gamma-elimination of phosphate from L-phosphohomoserine and the beta-addition of water to produce L-threonine. The chain is Threonine synthase (thrC) from Synechocystis sp. (strain ATCC 27184 / PCC 6803 / Kazusa).